Here is a 426-residue protein sequence, read N- to C-terminus: Phosphomethylpyrimidine synthase (426 aa).

Substrate-binding positions include Asn65, Met94, Tyr123, His162, 184–186 (SRG), 225–228 (DGMR), and Glu264. His268 is a binding site for Zn(2+). Substrate is bound at residue Tyr291. His332 serves as a coordination point for Zn(2+). Cys408, Cys411, and Cys415 together coordinate [4Fe-4S] cluster.

It belongs to the ThiC family. [4Fe-4S] cluster serves as cofactor.

It carries out the reaction 5-amino-1-(5-phospho-beta-D-ribosyl)imidazole + S-adenosyl-L-methionine = 4-amino-2-methyl-5-(phosphooxymethyl)pyrimidine + CO + 5'-deoxyadenosine + formate + L-methionine + 3 H(+). It participates in cofactor biosynthesis; thiamine diphosphate biosynthesis. Its function is as follows. Catalyzes the synthesis of the hydroxymethylpyrimidine phosphate (HMP-P) moiety of thiamine from aminoimidazole ribotide (AIR) in a radical S-adenosyl-L-methionine (SAM)-dependent reaction. The polypeptide is Phosphomethylpyrimidine synthase (Methanocaldococcus jannaschii (strain ATCC 43067 / DSM 2661 / JAL-1 / JCM 10045 / NBRC 100440) (Methanococcus jannaschii)).